The following is a 309-amino-acid chain: Transaldolase (309 aa).

Lysine 125 (schiff-base intermediate with substrate) is an active-site residue.

This sequence belongs to the transaldolase family. Type 1 subfamily. In terms of assembly, homodimer.

The protein resides in the cytoplasm. The catalysed reaction is D-sedoheptulose 7-phosphate + D-glyceraldehyde 3-phosphate = D-erythrose 4-phosphate + beta-D-fructose 6-phosphate. Its pathway is carbohydrate degradation; pentose phosphate pathway; D-glyceraldehyde 3-phosphate and beta-D-fructose 6-phosphate from D-ribose 5-phosphate and D-xylulose 5-phosphate (non-oxidative stage): step 2/3. Its function is as follows. Transaldolase is important for the balance of metabolites in the pentose-phosphate pathway. The protein is Transaldolase of Pseudomonas syringae pv. tomato (strain ATCC BAA-871 / DC3000).